Reading from the N-terminus, the 321-residue chain is tRNA U34 carboxymethyltransferase (321 aa).

Residues Lys90, Trp104, Lys109, Gly129, 151 to 153, 180 to 181, Met195, Tyr199, and Arg314 contribute to the carboxy-S-adenosyl-L-methionine site; these read DPT and IE.

The protein belongs to the class I-like SAM-binding methyltransferase superfamily. CmoB family. Homotetramer.

It carries out the reaction carboxy-S-adenosyl-L-methionine + 5-hydroxyuridine(34) in tRNA = 5-carboxymethoxyuridine(34) in tRNA + S-adenosyl-L-homocysteine + H(+). Its function is as follows. Catalyzes carboxymethyl transfer from carboxy-S-adenosyl-L-methionine (Cx-SAM) to 5-hydroxyuridine (ho5U) to form 5-carboxymethoxyuridine (cmo5U) at position 34 in tRNAs. The chain is tRNA U34 carboxymethyltransferase from Histophilus somni (strain 2336) (Haemophilus somnus).